Consider the following 353-residue polypeptide: Photosystem II protein D1 (353 aa).

The residue at position 2 (Thr2) is an N-acetylthreonine. Thr2 bears the Phosphothreonine mark. The next 3 membrane-spanning stretches (helical) occupy residues 29-46 (YIGWFGVLMIPTLLTATA), 118-133 (HFLLGVACYMGREWEL), and 142-156 (WIAVAYSAPVAAAAA). His118 is a binding site for chlorophyll a. Tyr126 lines the pheophytin a pocket. [CaMn4O5] cluster contacts are provided by Asp170 and Glu189. The chain crosses the membrane as a helical span at residues 197–218 (FHMLGVAGVFGGSLFSAMHGSL). Residue His198 participates in chlorophyll a binding. Residues His215 and 264–265 (SF) each bind a quinone. A Fe cation-binding site is contributed by His215. His272 is a binding site for Fe cation. Residues 274-288 (FLAAWPVVGIWFTAL) form a helical membrane-spanning segment. Residues His332, Glu333, Asp342, and Ala344 each coordinate [CaMn4O5] cluster. The propeptide occupies 345–353 (SVEAPSVNG).

This sequence belongs to the reaction center PufL/M/PsbA/D family. As to quaternary structure, PSII is composed of 1 copy each of membrane proteins PsbA, PsbB, PsbC, PsbD, PsbE, PsbF, PsbH, PsbI, PsbJ, PsbK, PsbL, PsbM, PsbT, PsbX, PsbY, PsbZ, Psb30/Ycf12, at least 3 peripheral proteins of the oxygen-evolving complex and a large number of cofactors. It forms dimeric complexes. The D1/D2 heterodimer binds P680, chlorophylls that are the primary electron donor of PSII, and subsequent electron acceptors. It shares a non-heme iron and each subunit binds pheophytin, quinone, additional chlorophylls, carotenoids and lipids. D1 provides most of the ligands for the Mn4-Ca-O5 cluster of the oxygen-evolving complex (OEC). There is also a Cl(-1) ion associated with D1 and D2, which is required for oxygen evolution. The PSII complex binds additional chlorophylls, carotenoids and specific lipids. is required as a cofactor. Post-translationally, tyr-161 forms a radical intermediate that is referred to as redox-active TyrZ, YZ or Y-Z. In terms of processing, C-terminally processed by CTPA; processing is essential to allow assembly of the oxygen-evolving complex and thus photosynthetic growth.

The protein resides in the plastid. It localises to the chloroplast thylakoid membrane. The catalysed reaction is 2 a plastoquinone + 4 hnu + 2 H2O = 2 a plastoquinol + O2. Functionally, photosystem II (PSII) is a light-driven water:plastoquinone oxidoreductase that uses light energy to abstract electrons from H(2)O, generating O(2) and a proton gradient subsequently used for ATP formation. It consists of a core antenna complex that captures photons, and an electron transfer chain that converts photonic excitation into a charge separation. The D1/D2 (PsbA/PsbD) reaction center heterodimer binds P680, the primary electron donor of PSII as well as several subsequent electron acceptors. The protein is Photosystem II protein D1 of Huperzia lucidula (Shining clubmoss).